The chain runs to 318 residues: Glutathione synthetase (318 aa).

The ATP-grasp domain maps to 125 to 311 (EKLFTAWFPE…ITGKLMDAIE (187 aa)). ATP is bound at residue 151 to 208 (FRQEHGDIILKPLDGMGGASIFRVKENDPNVSVIIETLTNHGQNYAMAQTFVPDISNG). Residues glutamate 282 and asparagine 284 each contribute to the Mg(2+) site.

Belongs to the prokaryotic GSH synthase family. Requires Mg(2+) as cofactor. It depends on Mn(2+) as a cofactor.

The enzyme catalyses gamma-L-glutamyl-L-cysteine + glycine + ATP = glutathione + ADP + phosphate + H(+). It participates in sulfur metabolism; glutathione biosynthesis; glutathione from L-cysteine and L-glutamate: step 2/2. The chain is Glutathione synthetase from Vibrio vulnificus (strain YJ016).